The sequence spans 286 residues: Phosphatidylserine decarboxylase proenzyme (286 aa).

Active-site charge relay system; for autoendoproteolytic cleavage activity residues include Asp88, His145, and Ser251. Catalysis depends on Ser251, which acts as the Schiff-base intermediate with substrate; via pyruvic acid; for decarboxylase activity. Ser251 is subject to Pyruvic acid (Ser); by autocatalysis.

It belongs to the phosphatidylserine decarboxylase family. PSD-B subfamily. Prokaryotic type I sub-subfamily. Heterodimer of a large membrane-associated beta subunit and a small pyruvoyl-containing alpha subunit. Pyruvate is required as a cofactor. In terms of processing, is synthesized initially as an inactive proenzyme. Formation of the active enzyme involves a self-maturation process in which the active site pyruvoyl group is generated from an internal serine residue via an autocatalytic post-translational modification. Two non-identical subunits are generated from the proenzyme in this reaction, and the pyruvate is formed at the N-terminus of the alpha chain, which is derived from the carboxyl end of the proenzyme. The autoendoproteolytic cleavage occurs by a canonical serine protease mechanism, in which the side chain hydroxyl group of the serine supplies its oxygen atom to form the C-terminus of the beta chain, while the remainder of the serine residue undergoes an oxidative deamination to produce ammonia and the pyruvoyl prosthetic group on the alpha chain. During this reaction, the Ser that is part of the protease active site of the proenzyme becomes the pyruvoyl prosthetic group, which constitutes an essential element of the active site of the mature decarboxylase.

The protein resides in the cell membrane. It catalyses the reaction a 1,2-diacyl-sn-glycero-3-phospho-L-serine + H(+) = a 1,2-diacyl-sn-glycero-3-phosphoethanolamine + CO2. It participates in phospholipid metabolism; phosphatidylethanolamine biosynthesis; phosphatidylethanolamine from CDP-diacylglycerol: step 2/2. Catalyzes the formation of phosphatidylethanolamine (PtdEtn) from phosphatidylserine (PtdSer). The sequence is that of Phosphatidylserine decarboxylase proenzyme from Verminephrobacter eiseniae (strain EF01-2).